Consider the following 348-residue polypeptide: Endoplasmic reticulum junction formation protein lunapark-A (348 aa).

At 1-43 (MSVFCLQAKPTTVEILEGIDKDIQILEDYSVKYQRQMKAVVGR) the chain is on the cytoplasmic side. A helical membrane pass occupies residues 44-64 (LLLYSILLYLMAGVVVYSWYL). Topologically, residues 65-67 (PEQ) are lumenal. Residues 68-88 (LMGRLVLGLPFLLFPLLVWIL) traverse the membrane as a helical segment. Topologically, residues 89-348 (RKVLILFFAR…EEDKQSDSGD (260 aa)) are cytoplasmic. Positions 105–126 (FKLEDLKAQKRKILEDVMETET) form a coiled coil. The tract at residues 142 to 211 (KKKTDFDSTP…HSAPGGPPER (70 aa)) is disordered. Residues 277 to 302 (CQQCLSHNGMALKEEFEYVAFRCAYC) form a C4-type; plays a role in ER morphology zinc finger. Residues 313–348 (PQAPRLPETAGEPKLPCDLNSSSCAAEEDKQSDSGD) form a disordered region. The span at 339–348 (EEDKQSDSGD) shows a compositional bias: basic and acidic residues.

This sequence belongs to the lunapark family. In terms of assembly, homodimer; homodimerization requires the C4-type zinc finger motif and decreases during mitosis in a phosphorylation-dependent manner. In terms of processing, phosphorylated. Phosphorylation occurs during interphase. Phosphorylation also occurs during mitosis; these phosphorylations reduce both its homodimerization and the ER three-way tubular junction formation.

The protein resides in the endoplasmic reticulum membrane. Its function is as follows. Endoplasmic reticulum (ER)-shaping membrane protein that plays a role in determining ER morphology. Involved in the stabilization of nascent three-way ER tubular junctions within the ER network. May also play a role as a curvature-stabilizing protein within three-way ER tubular junction network. The chain is Endoplasmic reticulum junction formation protein lunapark-A (lnpka) from Takifugu rubripes (Japanese pufferfish).